We begin with the raw amino-acid sequence, 125 residues long: Apolipoprotein C-IV (125 aa).

Positions Met-1–Cys-27 are cleaved as a signal peptide.

The protein belongs to the apolipoprotein C4 family.

It localises to the secreted. Functionally, may participate in lipoprotein metabolism. This is Apolipoprotein C-IV (APOC4) from Plecturocebus moloch (Dusky titi monkey).